We begin with the raw amino-acid sequence, 213 residues long: NADH-quinone oxidoreductase subunit C (213 aa).

Belongs to the complex I 30 kDa subunit family. As to quaternary structure, NDH-1 is composed of 15 different subunits. Subunits NuoB, C, D, E, F, and G constitute the peripheral sector of the complex.

It localises to the cell membrane. The enzyme catalyses a quinone + NADH + 5 H(+)(in) = a quinol + NAD(+) + 4 H(+)(out). Its function is as follows. NDH-1 shuttles electrons from NADH, via FMN and iron-sulfur (Fe-S) centers, to quinones in the respiratory chain. The immediate electron acceptor for the enzyme in this species is believed to be a menaquinone. Couples the redox reaction to proton translocation (for every two electrons transferred, four hydrogen ions are translocated across the cytoplasmic membrane), and thus conserves the redox energy in a proton gradient. This is NADH-quinone oxidoreductase subunit C from Deinococcus geothermalis (strain DSM 11300 / CIP 105573 / AG-3a).